The primary structure comprises 386 residues: MMNPPVDLPYIPDDLLLNCLARVSRLYYPILSLVSKRFRSLVASLELYEIRKLLGHREKCLYLNLRFSSESEPRWFTLCRRPTRSPNPNFNSGWFASCFIPHTMKKEKKSSDNNLMVPVPTSNFITPPSELTRITNGSNIYIVRVFTNGAFSSRFLFMDCRSHTLHEVPRMDKTKKKPFMIRVLDGKIYVIEGCKNPDYSNLIERFDLKTQTWEHVPSPSAEIRGSYITGSLVYDGKLYLFGDKRVVYKPKENKWDVVGLEMPLRWTPSYISCVVDNVIYSYGRSRVLMWYNTEERLWRYLKGLKKLPKLPKDCTCVRLLGYSGKVVVLWEKNVGGGDPQKKMIWCAEIALERRSANKIYGKIEWCDVVLTLPRSCSLLNFAAVTV.

The 47-residue stretch at 5–51 (PVDLPYIPDDLLLNCLARVSRLYYPILSLVSKRFRSLVASLELYEIR) folds into the F-box domain. 3 Kelch repeats span residues 187-236 (KIYV…VYDG), 238-285 (LYLF…YGRS), and 287-324 (VLMWYNTEERLWRYLKGLKKLPKLPKDCTCVRLLGYSG).

This Arabidopsis thaliana (Mouse-ear cress) protein is Putative F-box/kelch-repeat protein At4g11750.